We begin with the raw amino-acid sequence, 644 residues long: ATP-dependent zinc metalloprotease FtsH (644 aa).

Residues 1 to 11 (MNDNKNNTVRN) lie on the Stromal side of the membrane. The helical transmembrane segment at 12–32 (LLIGIALLSGISLTAKKFDLI) threads the bilayer. Residues 33–128 (GVQGSESGKN…FDAHPAEQKN (96 aa)) lie on the Lumenal side of the membrane. The helical transmembrane segment at 129–149 (IFVNILSNILLPIIFITGLVY) threads the bilayer. At 150 to 644 (LFQNSENFGG…KNIPYVSKFN (495 aa)) the chain is on the stromal side. ATP is bound at residue 226–233 (GPPGTGKT). Histidine 447 contacts Zn(2+). Glutamate 448 is an active-site residue. The Zn(2+) site is built by histidine 451 and aspartate 525.

This sequence in the central section; belongs to the AAA ATPase family. The protein in the C-terminal section; belongs to the peptidase M41 family. In terms of assembly, homohexamer. Zn(2+) serves as cofactor.

It is found in the plastid. It localises to the chloroplast thylakoid membrane. In terms of biological role, acts as a processive, ATP-dependent zinc metallopeptidase. The sequence is that of ATP-dependent zinc metalloprotease FtsH from Trieres chinensis (Marine centric diatom).